A 77-amino-acid polypeptide reads, in one-letter code: Protein OPG195 (77 aa).

The signal sequence occupies residues 1–17 (MRSLIIVLLFPSIIYSM).

This sequence belongs to the chordopoxvirinae B9 protein family.

This chain is Protein OPG195 (OPG197), found in Homo sapiens (Human).